Consider the following 108-residue polypeptide: Nucleoid-associated protein CPS_3743 (108 aa).

Positions 87 to 108 (NKDKMGALTGGMQLPPGMKMPF) are disordered.

It belongs to the YbaB/EbfC family. In terms of assembly, homodimer.

The protein localises to the cytoplasm. The protein resides in the nucleoid. Its function is as follows. Binds to DNA and alters its conformation. May be involved in regulation of gene expression, nucleoid organization and DNA protection. In Colwellia psychrerythraea (strain 34H / ATCC BAA-681) (Vibrio psychroerythus), this protein is Nucleoid-associated protein CPS_3743.